The following is a 331-amino-acid chain: Putative serine/threonine-protein kinase ZK507.1 (331 aa).

The region spanning 1–270 (MKVNEEGFAI…CKLTLKEPLV (270 aa)) is the Protein kinase domain. The active-site Proton acceptor is aspartate 116. The span at 302–314 (SDRNEENSLDRSK) shows a compositional bias: basic and acidic residues. The interval 302-331 (SDRNEENSLDRSKTGTLSFNNSKNKKPSRY) is disordered.

It belongs to the protein kinase superfamily. Ser/Thr protein kinase family.

It carries out the reaction L-seryl-[protein] + ATP = O-phospho-L-seryl-[protein] + ADP + H(+). The enzyme catalyses L-threonyl-[protein] + ATP = O-phospho-L-threonyl-[protein] + ADP + H(+). This chain is Putative serine/threonine-protein kinase ZK507.1, found in Caenorhabditis elegans.